Consider the following 100-residue polypeptide: Coiled-coil domain-containing protein 167 (100 aa).

Positions 14 to 81 form a coiled coil; it reads VASEIDRVEE…VLRGENRRNM (68 aa). A helical membrane pass occupies residues 82-99; sequence MLSVALLAISALFYYTFI.

It localises to the membrane. In Danio rerio (Zebrafish), this protein is Coiled-coil domain-containing protein 167 (ccdc167).